Here is a 92-residue protein sequence, read N- to C-terminus: Putative septation protein SpoVG (92 aa).

Belongs to the SpoVG family.

Its function is as follows. Could be involved in septation. The polypeptide is Putative septation protein SpoVG (Clostridium botulinum (strain Eklund 17B / Type B)).